A 525-amino-acid polypeptide reads, in one-letter code: Protein-export membrane protein SecD (525 aa).

6 helical membrane-spanning segments follow: residues 16–36, 368–388, 395–415, 421–441, 466–486, and 488–508; these read VLLL…KGLT, QAII…YFHY, IPVA…AALI, LPSI…QIVI, AFFI…FLLV, and FVGT…IGVL.

The protein belongs to the SecD/SecF family. SecD subfamily. As to quaternary structure, part of the protein translocation apparatus. Forms a complex with SecF.

Its subcellular location is the cell membrane. In terms of biological role, involved in protein export. In Thermococcus gammatolerans (strain DSM 15229 / JCM 11827 / EJ3), this protein is Protein-export membrane protein SecD.